The sequence spans 139 residues: NADPH-dependent 7-cyano-7-deazaguanine reductase (139 aa).

C34 functions as the Thioimide intermediate in the catalytic mechanism. The active-site Proton donor is the D41. Substrate is bound by residues 56-58 (VEL) and 75-76 (HE).

Belongs to the GTP cyclohydrolase I family. QueF type 1 subfamily.

It is found in the cytoplasm. The enzyme catalyses 7-aminomethyl-7-carbaguanine + 2 NADP(+) = 7-cyano-7-deazaguanine + 2 NADPH + 3 H(+). It functions in the pathway tRNA modification; tRNA-queuosine biosynthesis. Catalyzes the NADPH-dependent reduction of 7-cyano-7-deazaguanine (preQ0) to 7-aminomethyl-7-deazaguanine (preQ1). The polypeptide is NADPH-dependent 7-cyano-7-deazaguanine reductase (Thiobacillus denitrificans (strain ATCC 25259 / T1)).